Reading from the N-terminus, the 351-residue chain is Silk gland factor 3 (351 aa).

Disordered stretches follow at residues 61-88 and 131-154; these read ADPWAMHQHHAHAHQPDVKPPPAPHDHR and SSPRDPLHHHAMERDQPEEDTPTS. The span at 135 to 145 shows a compositional bias: basic and acidic residues; the sequence is DPLHHHAMERD. Residues 149–223 enclose the POU-specific domain; the sequence is EDTPTSDDLE…LLQKWLEEAD (75 aa). Positions 241–300 form a DNA-binding region, homeobox; sequence KRKKRTSIEVSVKGALEQHFHKQPKPSAQEITSLADSLQLEKEVVRVWFCNRRQKEKRMT. Residues 314–351 form a disordered region; the sequence is GHAHYGHGDVHGSPLQHSPPGLSPQHGLPQGAHTLAAH.

It belongs to the POU transcription factor family. Class-3 subfamily. As to expression, restricted to the middle silk gland.

The protein resides in the nucleus. In terms of biological role, involved in the transcriptional regulation of sericin-1 gene. The protein is Silk gland factor 3 (SGF3) of Bombyx mori (Silk moth).